Here is an 823-residue protein sequence, read N- to C-terminus: MSDVEKVDGECSASGKRERLTLKLGDKLKVPPSLARGTSTGKSFTTVEVRSKKRRPGEYISHDDKRRSGLNKAVSGLTAQEQLFRINAINMADSISAKEKELAAARKAKEEEELAAAAAVVEEAVEEVSVEGDVPPVEAVEAAVPDVEEVVAPVATPSHSNKSGHDDRGGKKYAHGATGRHKEKEGVSIKKVASSRGASKHIKLDIENALSGLEDKRVTRFSSSTHKRRSSNVKSGRRISREVVISDKMTVRDLALAMAEKAQDVLRMLSHVGVEARMDTGLDSEVACEIAVEFGHRPRVVSIVKMEQELSDVCGDDFVSEPRPPVVTVMGHVDHGKTSLLDVLRKSNVAEKEFRGITQHIGAYQIDVDGKKITFLDTPGHEAFADMRARGANVTDIVVLVVAADDGIMPQTVESINHVKAAGVAMVVAVNKIDKSDADVGRITNELLQYGVIAEELGGDVMIVPVSAKTGENIDKLQSAILLLAEMLELSAPRECRAQGVVIEAKIDRGCGVVATVIVQKGTLKKGDIIVAGDSSYGKVRSMFDDADRVVTSALPAMPVRVLGLNAIPKAGDTLIVMPSEKQARDLLWHRSEINSAREENRAVPSFSGAIMASMDSKVEEINLILKADVAGSMEAVSCAVEQLVHEEVKFNVLHKEMGDVTKSDVLLAEVSSAVILAFNVRVDAKARDLLRLKKVDVRHYQVIYDLVDDVRNMVSGKLKPIVQEMQVGLLTVRQMFSSGKSGTVLGCYVTEGAVTRGATVCVCRGETVIGEGTVKALRRFKEDVKEVNRGLECGLLVDGVKGVLAGDVIKVLEIVERMRGVE.

Disordered regions lie at residues 30–66 (VPPS…DDKR) and 156–192 (TPSH…IKKV). The segment covering 36 to 48 (RGTSTGKSFTTVE) has biased composition (polar residues). The span at 56 to 66 (PGEYISHDDKR) shows a compositional bias: basic and acidic residues. Residues 322–491 (PRPPVVTVMG…LLLAEMLELS (170 aa)) form the tr-type G domain. The segment at 331–338 (GHVDHGKT) is G1. A GTP-binding site is contributed by 331–338 (GHVDHGKT). The segment at 356–360 (GITQH) is G2. The interval 377 to 380 (DTPG) is G3. Residues 377–381 (DTPGH) and 431–434 (NKID) each bind GTP. The G4 stretch occupies residues 431 to 434 (NKID). The interval 467–469 (SAK) is G5.

It belongs to the TRAFAC class translation factor GTPase superfamily. Classic translation factor GTPase family. IF-2 subfamily.

The protein localises to the cytoplasm. Its function is as follows. One of the essential components for the initiation of protein synthesis. Protects formylmethionyl-tRNA from spontaneous hydrolysis and promotes its binding to the 30S ribosomal subunits. Also involved in the hydrolysis of GTP during the formation of the 70S ribosomal complex. This is Translation initiation factor IF-2 from Anaplasma phagocytophilum (strain HZ).